A 176-amino-acid polypeptide reads, in one-letter code: MGFPKEGEKVQIHSYKHNGSIHRMWEETTILKGTQSLVIGANDRTLVTESDGRTWITREPAICYFHANYWFNVIGMLREDGVYYYCNLSSPFAYDLEALKYIDYDLDIKVYPDMTYTLLDEDEYEKHSKMMKYPPVIDTILKRNVEYLRKWIHQRKGPFAPDFVDMWYERYLMYRD.

Arginine 23 (proton donor) is an active-site residue. Asparagine 87, aspartate 103, aspartate 105, aspartate 107, aspartate 120, and glutamate 123 together coordinate Mg(2+).

This sequence belongs to the Ntdp family. Mg(2+) is required as a cofactor.

It carries out the reaction a ribonucleoside 5'-triphosphate + H2O = a ribonucleoside 5'-diphosphate + phosphate + H(+). The catalysed reaction is a ribonucleoside 5'-diphosphate + H2O = a ribonucleoside 5'-phosphate + phosphate + H(+). Its function is as follows. Has nucleoside phosphatase activity towards nucleoside triphosphates and nucleoside diphosphates. In Bacillus cytotoxicus (strain DSM 22905 / CIP 110041 / 391-98 / NVH 391-98), this protein is Nucleoside triphosphate/diphosphate phosphatase.